A 154-amino-acid polypeptide reads, in one-letter code: Transcriptional repressor NrdR (154 aa).

The segment at 3–34 (CPTCQYNGTRVVDSRPADDGNSIRRRRECEKC) is a zinc-finger region. In terms of domain architecture, ATP-cone spans 49 to 139 (LIVVKKDGAR…VYRQFKDISV (91 aa)).

This sequence belongs to the NrdR family. It depends on Zn(2+) as a cofactor.

In terms of biological role, negatively regulates transcription of bacterial ribonucleotide reductase nrd genes and operons by binding to NrdR-boxes. The chain is Transcriptional repressor NrdR from Listeria monocytogenes serotype 4a (strain HCC23).